A 207-amino-acid polypeptide reads, in one-letter code: LexA repressor (207 aa).

Positions 28 to 48 (RAEIAQKLGFKSANAAEEHLK) form a DNA-binding region, H-T-H motif. Catalysis depends on for autocatalytic cleavage activity residues Ser124 and Lys161.

This sequence belongs to the peptidase S24 family. In terms of assembly, homodimer.

The enzyme catalyses Hydrolysis of Ala-|-Gly bond in repressor LexA.. Its function is as follows. Represses a number of genes involved in the response to DNA damage (SOS response), including recA and lexA. In the presence of single-stranded DNA, RecA interacts with LexA causing an autocatalytic cleavage which disrupts the DNA-binding part of LexA, leading to derepression of the SOS regulon and eventually DNA repair. The protein is LexA repressor of Aeromonas salmonicida (strain A449).